The chain runs to 424 residues: Tyrosine--tRNA ligase (424 aa).

Tyr37 provides a ligand contact to L-tyrosine. Residues Pro42–His51 carry the 'HIGH' region motif. Lys144 carries the N6-acetyllysine modification. L-tyrosine-binding residues include Tyr175 and Gln179. The 'KMSKS' region signature appears at Lys235–Thr239. ATP is bound at residue Lys238. The region spanning Ala357–Gly414 is the S4 RNA-binding domain.

Belongs to the class-I aminoacyl-tRNA synthetase family. TyrS type 1 subfamily. In terms of assembly, homodimer.

It localises to the cytoplasm. The enzyme catalyses tRNA(Tyr) + L-tyrosine + ATP = L-tyrosyl-tRNA(Tyr) + AMP + diphosphate + H(+). Its function is as follows. Catalyzes the attachment of tyrosine to tRNA(Tyr) in a two-step reaction: tyrosine is first activated by ATP to form Tyr-AMP and then transferred to the acceptor end of tRNA(Tyr). This is Tyrosine--tRNA ligase from Escherichia coli (strain K12 / DH10B).